The primary structure comprises 207 residues: High frequency lysogenization protein HflD homolog (207 aa).

The protein belongs to the HflD family.

The protein localises to the cytoplasm. It is found in the cell inner membrane. The protein is High frequency lysogenization protein HflD homolog of Teredinibacter turnerae (strain ATCC 39867 / T7901).